Here is a 513-residue protein sequence, read N- to C-terminus: ATP synthase subunit alpha (513 aa).

Residue 169 to 176 coordinates ATP; that stretch reads GDRQTGKT.

This sequence belongs to the ATPase alpha/beta chains family. In terms of assembly, F-type ATPases have 2 components, CF(1) - the catalytic core - and CF(0) - the membrane proton channel. CF(1) has five subunits: alpha(3), beta(3), gamma(1), delta(1), epsilon(1). CF(0) has three main subunits: a(1), b(2) and c(9-12). The alpha and beta chains form an alternating ring which encloses part of the gamma chain. CF(1) is attached to CF(0) by a central stalk formed by the gamma and epsilon chains, while a peripheral stalk is formed by the delta and b chains.

The protein localises to the cell inner membrane. It carries out the reaction ATP + H2O + 4 H(+)(in) = ADP + phosphate + 5 H(+)(out). Functionally, produces ATP from ADP in the presence of a proton gradient across the membrane. The alpha chain is a regulatory subunit. The protein is ATP synthase subunit alpha of Cupriavidus metallidurans (strain ATCC 43123 / DSM 2839 / NBRC 102507 / CH34) (Ralstonia metallidurans).